Consider the following 476-residue polypeptide: Trigger factor (476 aa).

The 88-residue stretch at 174–261 (GDIAVVSFKG…LKDLKEKELP (88 aa)) folds into the PPIase FKBP-type domain. A disordered region spans residues 436-476 (KENTTKTSKTTKNSKTTKATKTTKTTKTTKTSKTQNKKEKK). Positions 440–469 (TKTSKTTKNSKTTKATKTTKTTKTTKTSKT) are enriched in low complexity.

This sequence belongs to the FKBP-type PPIase family. Tig subfamily.

Its subcellular location is the cytoplasm. The enzyme catalyses [protein]-peptidylproline (omega=180) = [protein]-peptidylproline (omega=0). Functionally, involved in protein export. Acts as a chaperone by maintaining the newly synthesized protein in an open conformation. Functions as a peptidyl-prolyl cis-trans isomerase. The polypeptide is Trigger factor (Prochlorococcus marinus (strain MIT 9215)).